The primary structure comprises 288 residues: Mortality factor 4-like protein 2 (288 aa).

The segment covering 1–15 has biased composition (polar residues); sequence MSSRKQASQTRGQQS. A disordered region spans residues 1-115; sequence MSSRKQASQT…DPTVESEEAF (115 aa). S71 is subject to Phosphoserine. Residues 117–288 form the MRG domain; the sequence is SRMEVKVKIP…ASADYHRKAL (172 aa).

Component of the NuA4 histone acetyltransferase complex which contains the catalytic subunit KAT5/TIP60 and the subunits EP400, TRRAP/PAF400, BRD8/SMAP, EPC1, DMAP1/DNMAP1, RUVBL1/TIP49, RUVBL2, ING3, actin, ACTL6A/BAF53A, MORF4L1/MRG15, MORF4L2/MRGX, MRGBP, YEATS4/GAS41 and VPS72/YL1. The NuA4 complex interacts with MYC and the adenovirus E1A protein. MORF4L1 may also participate in the formation of NuA4 related complexes which lack the KAT5/TIP60 catalytic subunit, but which include the SWI/SNF related protein SRCAP. Component of the MSIN3A histone deacetylase complex, which includes SIN3A, HDAC2, ARID4B, MORF4L1, RBBP4/RbAp48, and RBBP7/RbAp46. Interacts with MRFAP1 and RB1. May also interact with one or more as yet undefined members of the TLE (transducin-like enhancer of split) family of transcriptional repressors.

The protein resides in the nucleus. In terms of biological role, component of the NuA4 histone acetyltransferase complex which is involved in transcriptional activation of select genes principally by acetylation of nucleosomal histone H4 and H2A. This modification may both alter nucleosome - DNA interactions and promote interaction of the modified histones with other proteins which positively regulate transcription. This complex may be required for the activation of transcriptional programs associated with oncogene and proto-oncogene mediated growth induction, tumor suppressor mediated growth arrest and replicative senescence, apoptosis, and DNA repair. The NuA4 complex ATPase and helicase activities seem to be, at least in part, contributed by the association of RUVBL1 and RUVBL2 with EP400. NuA4 may also play a direct role in DNA repair when directly recruited to sites of DNA damage. Also a component of the MSIN3A complex which acts to repress transcription by deacetylation of nucleosomal histones. This is Mortality factor 4-like protein 2 (Morf4l2) from Rattus norvegicus (Rat).